The sequence spans 204 residues: MNYFSMENHNFRQIKSEIRILGIDDAPFTPRSEEDVLLVGTVFRGGQWLDGVLTTTVRVDGDDATERIIEMVNGSRHLNQLRVIMLDGLTFGGFNVVDIVELSERTGLPVIVVVRKHPDMERIKRALKHRFSDWKARWRSIERAGRIHRVESREPLYIQTAGIEPDDAAEIVRISTTRSSIPEPLRAAHIIASGVTLGESRGSA.

It belongs to the UPF0215 family.

The chain is UPF0215 protein MTH_1316 from Methanothermobacter thermautotrophicus (strain ATCC 29096 / DSM 1053 / JCM 10044 / NBRC 100330 / Delta H) (Methanobacterium thermoautotrophicum).